The chain runs to 258 residues: Synapse differentiation-inducing gene protein 1 (258 aa).

The Cytoplasmic portion of the chain corresponds to 1-181 (MDGIIEQKSM…NFLMMPPRDH (181 aa)). Ser137 is subject to Phosphoserine. The chain crosses the membrane as a helical span at residues 182–202 (LGLSVFSMLCCFWPLGIAAFY). The Extracellular segment spans residues 203-228 (LSHETNKAVAKGDLHQASTSSRRALF). Residues 229 to 249 (LAVLSITIGTGVYVGVAVALI) constitute an intramembrane region (helical). Topologically, residues 250–258 (AYLSKNNHL) are extracellular.

This sequence belongs to the CD225/Dispanin family. As to quaternary structure, homodimer. Interacts with GRIA1 and GRIA2.

The protein localises to the cell membrane. It localises to the early endosome membrane. Its subcellular location is the postsynaptic density membrane. The protein resides in the synapse. It is found in the cell projection. The protein localises to the dendrite. It localises to the dendritic spine. In terms of biological role, may regulate AMPA receptor content at nascent synapses, and have a role in postsynaptic development and maturation. The sequence is that of Synapse differentiation-inducing gene protein 1 (SYNDIG1) from Homo sapiens (Human).